The following is a 257-amino-acid chain: Imidazole glycerol phosphate synthase subunit HisF (257 aa).

Residues D11 and D130 contribute to the active site.

This sequence belongs to the HisA/HisF family. In terms of assembly, heterodimer of HisH and HisF.

The protein resides in the cytoplasm. It carries out the reaction 5-[(5-phospho-1-deoxy-D-ribulos-1-ylimino)methylamino]-1-(5-phospho-beta-D-ribosyl)imidazole-4-carboxamide + L-glutamine = D-erythro-1-(imidazol-4-yl)glycerol 3-phosphate + 5-amino-1-(5-phospho-beta-D-ribosyl)imidazole-4-carboxamide + L-glutamate + H(+). It functions in the pathway amino-acid biosynthesis; L-histidine biosynthesis; L-histidine from 5-phospho-alpha-D-ribose 1-diphosphate: step 5/9. Functionally, IGPS catalyzes the conversion of PRFAR and glutamine to IGP, AICAR and glutamate. The HisF subunit catalyzes the cyclization activity that produces IGP and AICAR from PRFAR using the ammonia provided by the HisH subunit. The chain is Imidazole glycerol phosphate synthase subunit HisF from Shewanella putrefaciens (strain CN-32 / ATCC BAA-453).